The following is a 579-amino-acid chain: uncharacterized protein (579 aa).

The protein belongs to the UbiD family.

This is an uncharacterized protein from Chlamydia trachomatis serovar D (strain ATCC VR-885 / DSM 19411 / UW-3/Cx).